The following is a 140-amino-acid chain: ATP synthase epsilon chain (140 aa).

It belongs to the ATPase epsilon chain family. F-type ATPases have 2 components, CF(1) - the catalytic core - and CF(0) - the membrane proton channel. CF(1) has five subunits: alpha(3), beta(3), gamma(1), delta(1), epsilon(1). CF(0) has three main subunits: a, b and c.

Its subcellular location is the cell inner membrane. Functionally, produces ATP from ADP in the presence of a proton gradient across the membrane. In Colwellia maris, this protein is ATP synthase epsilon chain.